The chain runs to 36 residues: MSDIN-like toxin proprotein 10 (36 aa).

A propeptide spanning residues 1–10 (MSDINATRLP) is cleaved from the precursor. The segment at residues 11-19 (GAYPPVPMP) is a cross-link (cyclopeptide (Gly-Pro)). Residues 20 to 36 (CVGDADNFTLTRGENLC) constitute a propeptide that is removed on maturation.

It belongs to the MSDIN fungal toxin family. Post-translationally, processed by the macrocyclase-peptidase enzyme POPB to yield a toxic cyclic nonapeptide. POPB first removes 10 residues from the N-terminus. Conformational trapping of the remaining peptide forces the enzyme to release this intermediate rather than proceed to macrocyclization. The enzyme rebinds the remaining peptide in a different conformation and catalyzes macrocyclization of the N-terminal 9 residues.

Probable toxin that belongs to the MSDIN-like toxin family responsible for a large number of food poisoning cases and deaths. This is MSDIN-like toxin proprotein 10 from Amanita bisporigera (Destroying angel).